We begin with the raw amino-acid sequence, 177 residues long: Ribosome maturation factor RimM (177 aa).

The region spanning 100–177 is the PRC barrel domain; that stretch reads EDEYYWSDLV…TVLVAWPSDY (78 aa).

Belongs to the RimM family. Binds ribosomal protein uS19.

The protein resides in the cytoplasm. In terms of biological role, an accessory protein needed during the final step in the assembly of 30S ribosomal subunit, possibly for assembly of the head region. Essential for efficient processing of 16S rRNA. May be needed both before and after RbfA during the maturation of 16S rRNA. It has affinity for free ribosomal 30S subunits but not for 70S ribosomes. This is Ribosome maturation factor RimM from Psychrobacter arcticus (strain DSM 17307 / VKM B-2377 / 273-4).